The primary structure comprises 232 residues: Homeobox protein Rhox13 (232 aa).

The interval 45 to 114 is disordered; sequence QAAVASSHDS…EAAAPSVAAV (70 aa). The segment covering 68–105 has biased composition (acidic residues); the sequence is SDSESESDSESESDSSDSSDESDDDSSTSDEDTSDPEE. A DNA-binding region (homeobox) is located at residues 148-207; the sequence is RRGPPFHFAQWQVEEMESLFEETQYPDLLTRGELARTLNVPEVKVKVWFTNRRAKQRKIE.

This sequence belongs to the paired-like homeobox family.

It localises to the nucleus. Its function is as follows. Probable transcription factor. The polypeptide is Homeobox protein Rhox13 (Mus musculus (Mouse)).